The following is a 46-amino-acid chain: Photosystem II reaction center protein K (46 aa).

Residues 1–9 (MSTLPILLA) constitute a propeptide that is removed on maturation. Residues 25-45 (LPSIPVLFLLLAFVWQAAVSF) form a helical membrane-spanning segment.

It belongs to the PsbK family. PSII is composed of 1 copy each of membrane proteins PsbA, PsbB, PsbC, PsbD, PsbE, PsbF, PsbH, PsbI, PsbJ, PsbK, PsbL, PsbM, PsbT, PsbX, PsbY, PsbZ, Psb30/Ycf12, at least 3 peripheral proteins of the oxygen-evolving complex and a large number of cofactors. It forms dimeric complexes.

The protein localises to the plastid. It is found in the chloroplast thylakoid membrane. In terms of biological role, one of the components of the core complex of photosystem II (PSII). PSII is a light-driven water:plastoquinone oxidoreductase that uses light energy to abstract electrons from H(2)O, generating O(2) and a proton gradient subsequently used for ATP formation. It consists of a core antenna complex that captures photons, and an electron transfer chain that converts photonic excitation into a charge separation. This Nephroselmis olivacea (Green alga) protein is Photosystem II reaction center protein K.